A 1159-amino-acid polypeptide reads, in one-letter code: RAD51-associated protein 2 (1159 aa).

Residues 1-35 are disordered; it reads MSLPQPTPRMAELRKPTSSLTPPEDPDSQPPSSKR. The interval 1111-1159 is interaction with RAD51; sequence SHFPHGISRVRPLKTCSRPIRIGLSRKARIKQLHPYLKQMCYGNLKENF.

As to quaternary structure, interacts with RAD51. Specifically expressed in meiotic tissues. Highly expressed in testis.

This is RAD51-associated protein 2 (RAD51AP2) from Homo sapiens (Human).